The chain runs to 299 residues: tRNA dimethylallyltransferase (299 aa).

13–20 (GATASGKT) serves as a coordination point for ATP. 15 to 20 (TASGKT) serves as a coordination point for substrate. Residues 38-41 (DSRQ) are interaction with substrate tRNA.

It belongs to the IPP transferase family. In terms of assembly, monomer. It depends on Mg(2+) as a cofactor.

It carries out the reaction adenosine(37) in tRNA + dimethylallyl diphosphate = N(6)-dimethylallyladenosine(37) in tRNA + diphosphate. In terms of biological role, catalyzes the transfer of a dimethylallyl group onto the adenine at position 37 in tRNAs that read codons beginning with uridine, leading to the formation of N6-(dimethylallyl)adenosine (i(6)A). The sequence is that of tRNA dimethylallyltransferase from Prochlorococcus marinus (strain MIT 9312).